The sequence spans 312 residues: Glyoxylate/hydroxypyruvate reductase A (312 aa).

Arginine 227 is an active-site residue. Catalysis depends on histidine 275, which acts as the Proton donor.

Belongs to the D-isomer specific 2-hydroxyacid dehydrogenase family. GhrA subfamily.

It localises to the cytoplasm. It catalyses the reaction glycolate + NADP(+) = glyoxylate + NADPH + H(+). The catalysed reaction is (R)-glycerate + NAD(+) = 3-hydroxypyruvate + NADH + H(+). The enzyme catalyses (R)-glycerate + NADP(+) = 3-hydroxypyruvate + NADPH + H(+). Its function is as follows. Catalyzes the NADPH-dependent reduction of glyoxylate and hydroxypyruvate into glycolate and glycerate, respectively. In Escherichia fergusonii (strain ATCC 35469 / DSM 13698 / CCUG 18766 / IAM 14443 / JCM 21226 / LMG 7866 / NBRC 102419 / NCTC 12128 / CDC 0568-73), this protein is Glyoxylate/hydroxypyruvate reductase A.